The primary structure comprises 967 residues: RNA polymerase-associated protein RapA (967 aa).

Positions 163 to 333 constitute a Helicase ATP-binding domain; that stretch reads EVGQRHAPRV…FARLRLLDPN (171 aa). ATP is bound at residue 176–183; sequence DEVGLGKT. A DEAH box motif is present at residues 279–282; that stretch reads DEAH. One can recognise a Helicase C-terminal domain in the interval 489-677; that stretch reads RVEWLLNYLT…TCRQQHDSLK (189 aa).

It belongs to the SNF2/RAD54 helicase family. RapA subfamily. As to quaternary structure, interacts with the RNAP. Has a higher affinity for the core RNAP than for the holoenzyme. Its ATPase activity is stimulated by binding to RNAP.

Its function is as follows. Transcription regulator that activates transcription by stimulating RNA polymerase (RNAP) recycling in case of stress conditions such as supercoiled DNA or high salt concentrations. Probably acts by releasing the RNAP, when it is trapped or immobilized on tightly supercoiled DNA. Does not activate transcription on linear DNA. Probably not involved in DNA repair. This is RNA polymerase-associated protein RapA from Pectobacterium atrosepticum (strain SCRI 1043 / ATCC BAA-672) (Erwinia carotovora subsp. atroseptica).